A 194-amino-acid polypeptide reads, in one-letter code: Fe/S biogenesis protein NfuA (194 aa).

[4Fe-4S] cluster contacts are provided by C151 and C154.

It belongs to the NfuA family. In terms of assembly, homodimer. [4Fe-4S] cluster is required as a cofactor.

Involved in iron-sulfur cluster biogenesis. Binds a 4Fe-4S cluster, can transfer this cluster to apoproteins, and thereby intervenes in the maturation of Fe/S proteins. Could also act as a scaffold/chaperone for damaged Fe/S proteins. This is Fe/S biogenesis protein NfuA from Vibrio vulnificus (strain CMCP6).